Consider the following 253-residue polypeptide: Short-chain dehydrogenase/reductase ATR9 (253 aa).

The NADP(+) site is built by S15, S16, I18, S38, N39, R42, D65, and K129. S147 serves as the catalytic Proton donor. NADP(+) is bound at residue T194.

Belongs to the short-chain dehydrogenases/reductases (SDR) family.

Its pathway is mycotoxin biosynthesis. Short-chain dehydrogenase/reductase; part of the core atranone cluster (CAC) which products are predicted to catalyze most or all steps of mycotoxin atranone synthesis, starting from geranylgeranyl pyrophosphate (GGPP). The initial cyclization of GGPP to dolabellane is probably performed by the terpene cyclase ATR13. The Baeyer-Villiger oxidation near the end of the atranone synthesis, which converts atranones D and E to atranones F and G is predicted to be catalyzed by the monooxygenase ATR8. Of the CAC's other predicted gene products, the reducing PKS ATR6 might synthesize a polyketide chain. This polyketide is probably transferred onto the atranone backbone by the polyketide transferase ATR5. Other predicted CAC products include 4 oxygenases (ATR2, ATR3, ATR4, and ATR14), 3 short-chain reductases (ATR7, ATR9, and ATR10), and a methyltransferase (ATR12). These may all be involved in the various steps of atranone biosynthesis, although their specific roles must await experimental determination. The chain is Short-chain dehydrogenase/reductase ATR9 from Stachybotrys chlorohalonatus (strain IBT 40285).